A 236-amino-acid chain; its full sequence is Peroxisomal membrane protein 11D (236 aa).

N-acetylglycine is present on Gly-2. At 2-92 (GTTLDVSRAE…LPLVLLGKSK (91 aa)) the chain is on the cytoplasmic side. The helical transmembrane segment at 93 to 109 (NALLSTFLFLDQIVWLG) threads the bilayer. The Lumenal segment spans residues 110–207 (RSGIYKNKER…LLQLAPTKIT (98 aa)). A helical transmembrane segment spans residues 208-227 (PRVTGAFGFITSIISCYQLL). Over 228-236 (PTRPKIKTP) the chain is Cytoplasmic.

It belongs to the peroxin-11 family. In terms of assembly, homooligomer. Interacts with ARC5 and FIS1B on peroxisomes. As to expression, expressed in developing siliques.

Its subcellular location is the peroxisome membrane. In terms of biological role, involved in peroxisomal proliferation. Promotes peroxisomal duplication, aggregation or elongation without fission. The protein is Peroxisomal membrane protein 11D (PEX11D) of Arabidopsis thaliana (Mouse-ear cress).